The following is a 268-amino-acid chain: Eukaryotic translation initiation factor 3 subunit J (268 aa).

Disordered stretches follow at residues 1–117 (MTPS…DLKH) and 219–242 (NEKM…KTKV). A compositionally biased stretch (acidic residues) spans 26–44 (DEEDEEVLDSWDAAEDSEV). Residues 40 to 95 (EDSEVEREKAAKAAEAKAKAEAEAAAKKKSKAQRIEEHKAERRKNAEADSEEDEDE) adopt a coiled-coil conformation. 2 stretches are compositionally biased toward basic and acidic residues: residues 45–65 (EREK…EAAA) and 72–86 (QRIE…KNAE). Acidic residues predominate over residues 87-99 (ADSEEDEDEDEDE). 2 stretches are compositionally biased toward basic and acidic residues: residues 100-117 (AEKR…DLKH) and 220-232 (EKMR…DKGS).

The protein belongs to the eIF-3 subunit J family. In terms of assembly, component of the eukaryotic translation initiation factor 3 (eIF-3) complex.

Its subcellular location is the cytoplasm. Its function is as follows. Component of the eukaryotic translation initiation factor 3 (eIF-3) complex, which is involved in protein synthesis of a specialized repertoire of mRNAs and, together with other initiation factors, stimulates binding of mRNA and methionyl-tRNAi to the 40S ribosome. The eIF-3 complex specifically targets and initiates translation of a subset of mRNAs involved in cell proliferation. This is Eukaryotic translation initiation factor 3 subunit J (hcr1) from Aspergillus clavatus (strain ATCC 1007 / CBS 513.65 / DSM 816 / NCTC 3887 / NRRL 1 / QM 1276 / 107).